An 88-amino-acid chain; its full sequence is N(2)-fixation sustaining protein CowN (88 aa).

It belongs to the CowN family.

Its function is as follows. Is required to sustain N(2)-dependent growth in the presence of low levels of carbon monoxide (CO). Probably acts by protecting the N(2) fixation ability of the nitrogenase complex, which is inactivated in the presence of CO. This Rhodomicrobium vannielii (strain ATCC 17100 / DSM 162 / LMG 4299 / NCIMB 10020 / ATH 3.1.1) protein is N(2)-fixation sustaining protein CowN.